The primary structure comprises 814 residues: MEPDPKKIKLDIFNFPTARETRTPEEVAESYAEAVKSHPFYDNVHSVIDFYDSGTIKDGRGQIIGVVLREALPKYAVSMASELLASAAVRTSLRSMMFGGESPLSGIAGYFDYRGSPVELKSRKTSFTYEHEAAWPAVFPVVDYVSELYRHVAPERWKAQNDAIPDVVRIHGTPFSTLTINSRFRTASHTDVGDFDGGYSCIACLDGHFKGLALAFDDFGINVLMQPRDVMIFDSHHFHSNTEVELSFSGEDWKRLTCVFYYRAALGEPASYAEYQRRLEKSKQDNSFTPVVSNVRVKENGTNLNRPSPVYPICPSPFWVPMVAHCLQHCASEAQCVHDAMTADGSRLAEVMFGEPLSTSDGIPLRGEDKKLKANSDSASRPLSRLGGFSETNLMVSTAVEKKKYLNSEFLSHFISAQLLDMWKQARGKWLELVGREWTHMLALNPERKDFLWKNQSEMNSAFFDLCEVGKQVMLGLLGKEVALPKEEQAFWTMYAVHLNAACAEELHMPHVAMSLRKLNVKLKDFNFGGTRYFKDMPPEEQKRRMERKQRIEEARRHGMSSGAHEKRANWLTNDSFDYQTEDCVVDYAQHKWPPPALHAKEITKNVRTGELPTREGVVRVLVVLPDPQSKLECVDCKLEVPETVRCSCEWERLMSSLAVRRVLAAAQRNLQLPGSVTHGNIEIRFAFHSRLPTDMCDFVVLQHVLSCIPDDVLASAYIRRAAALCTGCVYVVETDVQCRQYYTLKCAARCDYDAVASLFFQQLHRVSYGTKAARVRTKGELESLIPTVCCARYKLQGSPLNTTVHVVSPAPSR.

Residues glutamine 62 to alanine 264 form a thymine dioxygenase region. Fe cation contacts are provided by histidine 189, aspartate 191, and histidine 239. Arginine 255 is a 2-oxoglutarate binding site. Residues threonine 392 to serine 561 are DNA-binding JBP1 domain.

Belongs to the TET family. JBP1 subfamily. Monomer. Binds to DNA as a monomer. Fe(2+) is required as a cofactor.

Its subcellular location is the nucleus. The enzyme catalyses thymine + 2-oxoglutarate + O2 = 5-hydroxymethyluracil + succinate + CO2. Dioxygenase that catalyzes the first step of DNA base J (beta-d-glucosyl-HOMedU) biosynthesis by converting thymine to 5-hydroxymethyluracil (HOMedU). DNA base J is a hypermodified thymidine residue found in the genome of kinetoplastid parasites, which is localized primarily to repetitive DNA, namely the telomeres, and is implicated in the regulation of antigenic variation. Also specifically binds to base J-containing DNA (J-DNA). Involved in propagation and maintenance of DNA base J synthesis initiated by JBP2 by specifically binding already synthesized DNA base J and propagating J synthesis. Thymine dioxygenase activity and J-DNA-binding are independent functions. The protein is Thymine dioxygenase JBP1 (JBP1) of Leishmania major.